Consider the following 476-residue polypeptide: Probable coniferyl aldehyde dehydrogenase (476 aa).

Catalysis depends on residues E225 and C259.

Belongs to the aldehyde dehydrogenase family. In terms of assembly, homodimer.

It catalyses the reaction (E)-coniferaldehyde + NADP(+) + H2O = (E)-ferulate + NADPH + 2 H(+). It carries out the reaction (E)-coniferaldehyde + NAD(+) + H2O = (E)-ferulate + NADH + 2 H(+). This chain is Probable coniferyl aldehyde dehydrogenase (calB), found in Pseudomonas aeruginosa (strain ATCC 15692 / DSM 22644 / CIP 104116 / JCM 14847 / LMG 12228 / 1C / PRS 101 / PAO1).